A 263-amino-acid chain; its full sequence is Putative steroid dehydrogenase 4 (263 aa).

The active-site Proton acceptor is the tyrosine 154.

This sequence belongs to the short-chain dehydrogenases/reductases (SDR) family. 17-beta-HSD 3 subfamily.

The chain is Putative steroid dehydrogenase 4 (stdh-4) from Caenorhabditis elegans.